The following is a 500-amino-acid chain: Serine/threonine protein phosphatase 2A 57 kDa regulatory subunit B' kappa isoform (500 aa).

The disordered stretch occupies residues M1–R53. Residues L21–G37 are compositionally biased toward polar residues.

The protein belongs to the phosphatase 2A regulatory subunit B56 family. In terms of assembly, PP2A consists of a common heteromeric enzyme, composed of a catalytic subunit (subunits C), a constant regulatory subunit (subunit A), and a variety of regulatory subunits such as subunits B (the R2/B/PR55/B55, R3/B''/PR72/PR130/PR59 and R5/B'/B56 families).

It is found in the cytoplasm. In terms of biological role, the B regulatory subunit may modulate substrate selectivity and catalytic activity, and may also direct the localization of the catalytic enzyme to a particular subcellular compartment. The protein is Serine/threonine protein phosphatase 2A 57 kDa regulatory subunit B' kappa isoform (B'KAPPA) of Arabidopsis thaliana (Mouse-ear cress).